Reading from the N-terminus, the 305-residue chain is Aspartate carbamoyltransferase catalytic subunit (305 aa).

Residues arginine 53 and threonine 54 each coordinate carbamoyl phosphate. Lysine 82 lines the L-aspartate pocket. Carbamoyl phosphate is bound by residues arginine 103, histidine 131, and glutamine 134. Residues arginine 164 and arginine 226 each contribute to the L-aspartate site. Carbamoyl phosphate is bound by residues leucine 265 and proline 266.

The protein belongs to the aspartate/ornithine carbamoyltransferase superfamily. ATCase family. In terms of assembly, heterooligomer of catalytic and regulatory chains.

The catalysed reaction is carbamoyl phosphate + L-aspartate = N-carbamoyl-L-aspartate + phosphate + H(+). It participates in pyrimidine metabolism; UMP biosynthesis via de novo pathway; (S)-dihydroorotate from bicarbonate: step 2/3. Functionally, catalyzes the condensation of carbamoyl phosphate and aspartate to form carbamoyl aspartate and inorganic phosphate, the committed step in the de novo pyrimidine nucleotide biosynthesis pathway. The sequence is that of Aspartate carbamoyltransferase catalytic subunit from Ignicoccus hospitalis (strain KIN4/I / DSM 18386 / JCM 14125).